We begin with the raw amino-acid sequence, 102 residues long: Secretoglobin family 1D member (102 aa).

The signal sequence occupies residues 1–21 (MRLSVTALLVTLALCYYEANA). An N-linked (GlcNAc...) asparagine glycan is attached at Asn-87.

This sequence belongs to the secretoglobin family. Lipophilin subfamily.

It is found in the secreted. In terms of biological role, may bind androgens and other steroids. May be under transcriptional regulation of steroid hormones. The sequence is that of Secretoglobin family 1D member (SCGB1D) from Bos taurus (Bovine).